The primary structure comprises 286 residues: ATP synthase gamma chain (286 aa).

It belongs to the ATPase gamma chain family. F-type ATPases have 2 components, CF(1) - the catalytic core - and CF(0) - the membrane proton channel. CF(1) has five subunits: alpha(3), beta(3), gamma(1), delta(1), epsilon(1). CF(0) has three main subunits: a, b and c.

The protein resides in the cell inner membrane. Produces ATP from ADP in the presence of a proton gradient across the membrane. The gamma chain is believed to be important in regulating ATPase activity and the flow of protons through the CF(0) complex. The sequence is that of ATP synthase gamma chain from Christiangramia forsetii (strain DSM 17595 / CGMCC 1.15422 / KT0803) (Gramella forsetii).